The chain runs to 190 residues: UPF0200 protein TSIB_0920 (190 aa).

7–14 (GMPGSGKG) is a binding site for ATP.

The protein belongs to the UPF0200 family.

The sequence is that of UPF0200 protein TSIB_0920 from Thermococcus sibiricus (strain DSM 12597 / MM 739).